The chain runs to 258 residues: D-beta-hydroxybutyrate dehydrogenase (258 aa).

8 to 32 (LVTGSTSGIGLGIAKALAAQGANII) provides a ligand contact to NAD(+). S140 contacts substrate. Y153 serves as the catalytic Proton acceptor.

This sequence belongs to the short-chain dehydrogenases/reductases (SDR) family.

It carries out the reaction (R)-3-hydroxybutanoate + NAD(+) = acetoacetate + NADH + H(+). In Cupriavidus necator (strain ATCC 17699 / DSM 428 / KCTC 22496 / NCIMB 10442 / H16 / Stanier 337) (Ralstonia eutropha), this protein is D-beta-hydroxybutyrate dehydrogenase (hbdH1).